Here is a 278-residue protein sequence, read N- to C-terminus: Neuronal membrane glycoprotein M6-a (278 aa).

An N-acetylmethionine modification is found at methionine 1. Topologically, residues 1–22 (MEENMEEGQTQKGCFECCIKCL) are cytoplasmic. The helical transmembrane segment at 23–43 (GGIPYASLIATILLYAGVALF) threads the bilayer. Over 44 to 84 (CGCGHEALSGTVNILQTYFELARTAGDTLDVFTMIDIFKYV) the chain is Extracellular. The chain crosses the membrane as a helical span at residues 85–105 (IYGIAAAFFVYGILLMVEGFF). Topologically, residues 106 to 127 (TTGAIKDLYGDFKITTCGRCVS) are cytoplasmic. A helical membrane pass occupies residues 128–148 (AWFIMLTYLFMLAWLGVTAFT). Residues 149–213 (SLPVYMYFNV…STELNMTFHL (65 aa)) are Extracellular-facing. Residue asparagine 164 is glycosylated (N-linked (GlcNAc...) asparagine). A disulfide bridge links cysteine 174 with cysteine 192. A glycan (N-linked (GlcNAc...) asparagine) is linked at asparagine 208. The chain crosses the membrane as a helical span at residues 214–234 (FIVALAGAGAAVIAMVHYLMV). The Cytoplasmic portion of the chain corresponds to 235-278 (LSANWAYVKDACRMQKYEDIKSKEEQELHDIHSTRSKERLNAYT). Residue serine 256 is modified to Phosphoserine. Position 278 is a phosphothreonine (threonine 278).

The protein belongs to the myelin proteolipid protein family. In terms of assembly, interacts with OPRM1. Interacts with palmitoyltransferase ZDHHC17/HIP14; the interaction leads to palmitoylation of GPM6A. N-glycosylated. Post-translationally, palmitoylated by ZDHHC17/HIP14. Widely expressed in the CNS. Found especially in the granule cell layer of the cerebellum but not in the molecular layer or white matter. Expressed in the immature embryonic retina including the nerve fiber layer (NFL), inner plexiform layer (IPL), and outer plexiform layer (OPL). Weakly expressed in processes of Mueller glia cells.

Its subcellular location is the cell membrane. It localises to the cell projection. It is found in the axon. The protein localises to the growth cone. The protein resides in the dendritic spine. Its subcellular location is the filopodium. It localises to the neuron projection. Its function is as follows. Involved in neuronal differentiation, including differentiation and migration of neuronal stem cells. Plays a role in neuronal plasticity and is involved in neurite and filopodia outgrowth, filopodia motility and probably synapse formation. Gpm6a-induced filopodia formation involves mitogen-activated protein kinase (MAPK) and Src signaling pathways. Conflictingly, PubMed:22162747 reports that induced cellular protrusions are simple membrane-wrapped tubules without actin or tubulin-based cytoskeletons and with Gpm6a gliding along membrane edges indicative for a function in actin-independent membrane deformation. May be involved in neuronal NGF-dependent Ca(2+) influx. May be involved in regulation of endocytosis and intracellular trafficking of G-protein-coupled receptors (GPCRs); enhances internalization and recycling of mu-type opioid receptor. In Mus musculus (Mouse), this protein is Neuronal membrane glycoprotein M6-a (Gpm6a).